Consider the following 151-residue polypeptide: Transcriptional repressor NrdR (151 aa).

A zinc finger lies at 3-34 (CPFCSHPDTQVVETREAEDGGFIRRRRQCGGC). Residues 49 to 139 (PAIVKKDGRR…VYRSFEDVDD (91 aa)) form the ATP-cone domain.

This sequence belongs to the NrdR family. Zn(2+) serves as cofactor.

Functionally, negatively regulates transcription of bacterial ribonucleotide reductase nrd genes and operons by binding to NrdR-boxes. This Delftia acidovorans (strain DSM 14801 / SPH-1) protein is Transcriptional repressor NrdR.